Reading from the N-terminus, the 308-residue chain is Ribosomal RNA large subunit methyltransferase F (308 aa).

Belongs to the methyltransferase superfamily. METTL16/RlmF family.

It is found in the cytoplasm. The catalysed reaction is adenosine(1618) in 23S rRNA + S-adenosyl-L-methionine = N(6)-methyladenosine(1618) in 23S rRNA + S-adenosyl-L-homocysteine + H(+). Its function is as follows. Specifically methylates the adenine in position 1618 of 23S rRNA. The polypeptide is Ribosomal RNA large subunit methyltransferase F (Salmonella arizonae (strain ATCC BAA-731 / CDC346-86 / RSK2980)).